The sequence spans 470 residues: MADVDELEDPMEEMTSYTFARFLRSPETEAFVRNLDRPPQMPAMRYVYLYCLCKQIQEFSGETGFCDFVSSLVQENDSQDGPSLKSIYWGLQEATDEQRTVLCSYVESMTRGQSENLMWDILRNGIISSSKLLSTIKNGPTKVFEPAPISTNHYFGGPVAFGLRCEDTVKDIVCKLICGDASANRQFGFMISPTDGIFGVSLDLCVNVESQGDFILFTDRSCIYEIKCRFKYLFSKSEFDPIYPSYTALYKRPCKRSFIRFINSIARPTVEYVPDGRLPSEGDYLLTQDEAWNLKDVRKRKLGPGHDLVADSLAANRGVESMLYVMTDPSENAGRIGIKDRVPVNIFINPRHNYFYQVLLQYKIVGDYVRHSGGGKPGRDCSPRVNIVTAFFRKRSPLDPATCTLGSDLLLDASVEIPVAVLVTPVVLPDSVIRKTLSTAAGSWKAYADNTFDTAPWVPSGLFADDESTP.

Belongs to the herpesviridae alkaline nuclease family. Forms a complex with the DNA polymerase, the DNA polymerase processivity factor, and the major DNA binding protein.

The protein resides in the host nucleus. The protein localises to the host cytoplasm. Functionally, plays a role in processing non linear or branched viral DNA intermediates in order to promote the production of mature packaged unit-length linear progeny viral DNA molecules. Exhibits endonuclease and exonuclease activities and accepts both double-stranded and single-stranded DNA as substrate. Exonuclease digestion of DNA is in the 5'-&gt; 3' direction and the products are 5'-monophosphate nucleosides. Additionally, forms a recombinase with the major DNA-binding protein, which displays strand exchange activity. Also acts as a cytoplasmic RNA endonuclease that induces degradation of the majority of the cellular messenger RNAs during early lytic infection. The resulting inhibition of cellular protein synthesis serves to ensure maximal viral gene expression and evasion from host immune response. Internally cleaves host mRNAs which are then degraded by the cellular exonuclease XRN1. Bypasses therefore the regulatory steps of deadenylation and decapping normally required for XRN1 activation. This Epstein-Barr virus (strain GD1) (HHV-4) protein is Shutoff alkaline exonuclease.